The primary structure comprises 152 residues: uncharacterized protein (152 aa).

This is an uncharacterized protein from Brachyspira hyodysenteriae (Treponema hyodysenteriae).